A 312-amino-acid chain; its full sequence is Serine/threonine-protein phosphatase CPPED1 (312 aa).

Serine 2 is subject to Phosphoserine. A catalytic region spans residues 47 to 250 (KAWSTGNCDN…AVFSGHYHRN (204 aa)). Positions 90, 127, and 246 each coordinate a divalent metal cation. Serine 293 carries the phosphoserine modification.

The protein belongs to the metallophosphoesterase superfamily. CPPED1 family. It depends on a divalent metal cation as a cofactor.

It is found in the cytoplasm. The enzyme catalyses O-phospho-L-seryl-[protein] + H2O = L-seryl-[protein] + phosphate. It carries out the reaction O-phospho-L-threonyl-[protein] + H2O = L-threonyl-[protein] + phosphate. Its function is as follows. Protein phosphatase that dephosphorylates AKT family kinase specifically at 'Ser-473', blocking cell cycle progression and promoting cell apoptosis. May play an inhibitory role in glucose uptake by adipocytes. The polypeptide is Serine/threonine-protein phosphatase CPPED1 (Cpped1) (Rattus norvegicus (Rat)).